A 330-amino-acid polypeptide reads, in one-letter code: Inactive hydroxysteroid dehydrogenase-like protein 1 (330 aa).

Alanine 2 carries the N-acetylalanine modification. Residues 2–82 (AAVDSFYLLY…SGATDGIGKA (81 aa)) form a required for mitochondria translocation region. NADP(+)-binding positions include 74–80 (GATDGIG), aspartate 125, and lysine 222.

This sequence belongs to the short-chain dehydrogenases/reductases (SDR) family. 17-beta-HSD 3 subfamily. In terms of assembly, interacts with STYXL1. In terms of tissue distribution, highly expressed in testis and ovary. Also detected in thyroid, spinal cord, adrenal gland, heart, placenta, skeletal muscle, small intestine, colon, spleen, prostate and pancreas.

The protein resides in the mitochondrion. The polypeptide is Inactive hydroxysteroid dehydrogenase-like protein 1 (HSDL1) (Homo sapiens (Human)).